Here is a 130-residue protein sequence, read N- to C-terminus: Small ribosomal subunit protein uS8 (130 aa).

The protein belongs to the universal ribosomal protein uS8 family. As to quaternary structure, part of the 30S ribosomal subunit. Contacts proteins S5 and S12.

One of the primary rRNA binding proteins, it binds directly to 16S rRNA central domain where it helps coordinate assembly of the platform of the 30S subunit. The polypeptide is Small ribosomal subunit protein uS8 (Actinobacillus succinogenes (strain ATCC 55618 / DSM 22257 / CCUG 43843 / 130Z)).